The chain runs to 222 residues: 2-hydroxypent-2,4-dienoate hydratase (222 aa).

This sequence belongs to the hydratase/decarboxylase family.

It functions in the pathway aromatic compound metabolism; benzoate degradation via hydroxylation. In terms of biological role, conversion of 2-hydroxypent-2,4-dienoate into 4-hydroxy-2-oxopentanoate. In Pseudomonas putida (Arthrobacter siderocapsulatus), this protein is 2-hydroxypent-2,4-dienoate hydratase (xylJ).